Consider the following 258-residue polypeptide: Uridylate cyclase (258 aa).

Residues 50–190 (AAIFIDLRGS…DVVNKASKMC (141 aa)) enclose the Guanylate cyclase domain. A ribonucleoside 5'-triphosphate is bound at residue Phe53. Mn(2+)-binding residues include Asp55 and Asp102.

Belongs to the adenylyl cyclase class-4/guanylyl cyclase family. Pyrimidine cyclase subfamily. Homodimer. Requires Mn(2+) as cofactor.

The protein localises to the cytoplasm. The catalysed reaction is UTP = 3',5'-cyclic UMP + diphosphate. Functionally, pycsar (pyrimidine cyclase system for antiphage resistance) provides immunity against bacteriophage. The pyrimidine cyclase (PycC) synthesizes cyclic nucleotides in response to infection; these serve as specific second messenger signals. The signals activate the adjacent effector, leading to bacterial cell death and abortive phage infection. A clade C Pycsar system. In terms of biological role, the pyrimidine cyclase gene of a two-gene Pycsar system, weakly generates cyclic UMP (cUMP) from UTP, has little to no activity on ATP, CTP or GTP. Expression of this and adjacent effector GmPycTM (AC P0DV43) probably confers resistance to bacteriophage. The genes are probably only expressed in response to bacteriophage infection. This chain is Uridylate cyclase, found in Gulbenkiania mobilis.